A 317-amino-acid polypeptide reads, in one-letter code: Melanocyte-stimulating hormone receptor (317 aa).

Over 1-37 the chain is Extracellular; that stretch reads MPAQGSQRGLLGAVNFTPTATPHLRPAANQTGPQCLE. N-linked (GlcNAc...) asparagine glycosylation is present at Asn-29. Residues 38-63 form a helical membrane-spanning segment; sequence VSVPDGLFLCLGLVSLVENTLVVAAI. At 64–72 the chain is on the cytoplasmic side; that stretch reads AKNRNLHSP. A helical membrane pass occupies residues 73–93; that stretch reads MYCFICCLALSDLLVSVSNLL. The Extracellular portion of the chain corresponds to 94–118; that stretch reads ETAVLLLLEVGALAAQATVVQQLGN. The helical transmembrane segment at 119-140 threads the bilayer; it reads VIDVLICSSMVSSLCSLGAIAM. The Cytoplasmic segment spans residues 141-163; the sequence is DRYISIFYALRYHSIVTLARARR. The helical transmembrane segment at 164 to 183 threads the bilayer; the sequence is AIAAVWAASILSSTLFITYY. Over 184-191 the chain is Extracellular; that stretch reads DRTAALLC. Residues 192 to 211 form a helical membrane-spanning segment; the sequence is LVVFFLAMLVLMALLYVHML. The Cytoplasmic segment spans residues 212–240; the sequence is IQACQHAQAIARLHKRQHPVQQGWGLKGA. Residues 241 to 266 form a helical membrane-spanning segment; that stretch reads ATLTILLGVFFLCWGPFFLHLTLIAV. The Extracellular segment spans residues 267–279; sequence CPQHPTCSCIFKN. Residues 280 to 300 traverse the membrane as a helical segment; that stretch reads FRLFLALIICNTIVDPLIYAF. The Cytoplasmic portion of the chain corresponds to 301-317; the sequence is RSQELRRTLKEVLLFSW.

It belongs to the G-protein coupled receptor 1 family. In terms of assembly, interacts with MGRN1, but does not undergo MGRN1-mediated ubiquitination; this interaction competes with GNAS-binding and thus inhibits agonist-induced cAMP production. Interacts with OPN3; the interaction results in a decrease in MC1R-mediated cAMP signaling and ultimately a decrease in melanin production in melanocytes.

It is found in the cell membrane. Functionally, receptor for MSH (alpha, beta and gamma) and ACTH. The activity of this receptor is mediated by G proteins which activate adenylate cyclase. Mediates melanogenesis, the production of eumelanin (black/brown) and phaeomelanin (red/yellow), via regulation of cAMP signaling in melanocytes. This chain is Melanocyte-stimulating hormone receptor (MC1R), found in Eulemur fulvus fulvus (Brown lemur).